Reading from the N-terminus, the 34-residue chain is uncharacterized protein (34 aa).

This is an uncharacterized protein from Saccharomyces cerevisiae (strain ATCC 204508 / S288c) (Baker's yeast).